Here is a 692-residue protein sequence, read N- to C-terminus: MKRETPLDRYRNIGIMAHIDAGKTTTTERILCYTGKSHKIGEVHDGAATMDWMEQEQERGITITSAATTAFWRENRVNIIDTPGHVDFTIEVERSLRVLDGAIAVFDSVAGVEPQSETVWRQADKYKVPRMCFVNKMDRIGADFYRCVDMIIDRLGAVPLVINLPIGSESDYAGVIDLIKMKAVIWHSEDLGAHFDYVDIPAEYAEKAAEYREKLLETAVEMDDAAMEAYLEGVEPDEETLKKCIRKGTIAMKFVPVLNGSSFKNKGVQPMLDAVVDFLPSPLDVPAIHGLIPETHEDVIRGCSDDEPFSALAFKIMNDPFVGSLTFARVYSGTVESGSYVQNTVKDKRERIGRMLLMHANNREEIKWAGAGDIVAIVGLKDTTTGDTLSDTIKPVILERMEFPEPVIEVAVEPKTKADVEKMGMALARLAAEDPSFRVASDSESGQTVIKGMGELHLEILVDRMKREFKVECSVGAPQVAYRETISKVFTVDYVHKKQSGGSGQFAKVSITFSPLPPGSGYQFESKIVGGSVPKEYIPGVEKGLKSAIDTGVIAGFPVTDMKASLIDGGYHDVDSSVLAFEIAARAAFREGLPKAGPKLLEPIMKVEVVTPEDYMGDVIGDLNSRRGNILGMDQRGNARVIGAMVPLANMFGYVNTLRSMSQGRAQYTMHFDHYSEVPNNVSEEIRAKMAG.

Residues 8–283 enclose the tr-type G domain; the sequence is DRYRNIGIMA…AVVDFLPSPL (276 aa). GTP-binding positions include 17 to 24, 81 to 85, and 135 to 138; these read AHIDAGKT, DTPGH, and NKMD.

It belongs to the TRAFAC class translation factor GTPase superfamily. Classic translation factor GTPase family. EF-G/EF-2 subfamily.

The protein localises to the cytoplasm. Its function is as follows. Catalyzes the GTP-dependent ribosomal translocation step during translation elongation. During this step, the ribosome changes from the pre-translocational (PRE) to the post-translocational (POST) state as the newly formed A-site-bound peptidyl-tRNA and P-site-bound deacylated tRNA move to the P and E sites, respectively. Catalyzes the coordinated movement of the two tRNA molecules, the mRNA and conformational changes in the ribosome. The sequence is that of Elongation factor G from Rhodospirillum rubrum (strain ATCC 11170 / ATH 1.1.1 / DSM 467 / LMG 4362 / NCIMB 8255 / S1).